Here is a 156-residue protein sequence, read N- to C-terminus: Ribosomal RNA large subunit methyltransferase H (156 aa).

S-adenosyl-L-methionine contacts are provided by residues L73, G104, and 123–128; that span reads LSSLTL.

The protein belongs to the RNA methyltransferase RlmH family. In terms of assembly, homodimer.

The protein resides in the cytoplasm. It carries out the reaction pseudouridine(1915) in 23S rRNA + S-adenosyl-L-methionine = N(3)-methylpseudouridine(1915) in 23S rRNA + S-adenosyl-L-homocysteine + H(+). Its function is as follows. Specifically methylates the pseudouridine at position 1915 (m3Psi1915) in 23S rRNA. This is Ribosomal RNA large subunit methyltransferase H from Neisseria meningitidis serogroup C (strain 053442).